The following is a 427-amino-acid chain: Serine--tRNA ligase (427 aa).

L-serine is bound at residue 231 to 233 (TAE). 262-264 (RSE) serves as a coordination point for ATP. E285 contributes to the L-serine binding site. 349-352 (EISS) contacts ATP. An L-serine-binding site is contributed by S385.

This sequence belongs to the class-II aminoacyl-tRNA synthetase family. Type-1 seryl-tRNA synthetase subfamily. Homodimer. The tRNA molecule binds across the dimer.

The protein localises to the cytoplasm. It carries out the reaction tRNA(Ser) + L-serine + ATP = L-seryl-tRNA(Ser) + AMP + diphosphate + H(+). It catalyses the reaction tRNA(Sec) + L-serine + ATP = L-seryl-tRNA(Sec) + AMP + diphosphate + H(+). It functions in the pathway aminoacyl-tRNA biosynthesis; selenocysteinyl-tRNA(Sec) biosynthesis; L-seryl-tRNA(Sec) from L-serine and tRNA(Sec): step 1/1. Functionally, catalyzes the attachment of serine to tRNA(Ser). Is also able to aminoacylate tRNA(Sec) with serine, to form the misacylated tRNA L-seryl-tRNA(Sec), which will be further converted into selenocysteinyl-tRNA(Sec). This Rhizobium leguminosarum bv. trifolii (strain WSM2304) protein is Serine--tRNA ligase.